A 319-amino-acid chain; its full sequence is tRNA uridine(34) hydroxylase (319 aa).

The 95-residue stretch at K127 to E221 folds into the Rhodanese domain. The active-site Cysteine persulfide intermediate is C181.

Belongs to the TrhO family.

The enzyme catalyses uridine(34) in tRNA + AH2 + O2 = 5-hydroxyuridine(34) in tRNA + A + H2O. In terms of biological role, catalyzes oxygen-dependent 5-hydroxyuridine (ho5U) modification at position 34 in tRNAs. The protein is tRNA uridine(34) hydroxylase of Bacillus cereus (strain Q1).